Here is a 265-residue protein sequence, read N- to C-terminus: MGYFKRVLLYIIVMVLSVFIIGCDKSSDTSEKSKGDSKEAQIKKSFAKTLDMYPTENLEDFYDKEGYRDGKFKKGDKGTWVIRSEMTTELKNENMVSKGMVIRLNRNSRTCTGEYFVRIVKEDSEGKVYSDERKYPVKMENNKIIPLKPIDDEKVKKEIEEFKFFVQYGNFKELENYKDGEVTYNPEAPIYSAQYQLKNSDYNVEQLRKRYNIPTQKAPKLLLKGSGNLKGSSVGYKNIEFTFVENKEENIYFTDSVYFNPSEDK.

The signal sequence occupies residues 1–22 (MGYFKRVLLYIIVMVLSVFIIG). The N-palmitoyl cysteine moiety is linked to residue C23. Residue C23 is the site of S-diacylglycerol cysteine attachment.

This sequence belongs to the staphylococcal tandem lipoprotein family.

It localises to the cell membrane. This is an uncharacterized protein from Staphylococcus aureus (strain MSSA476).